The primary structure comprises 336 residues: tRNA N6-adenosine threonylcarbamoyltransferase (336 aa).

2 residues coordinate Fe cation: His-114 and His-118. Substrate-binding positions include 136–140 (LVSGG), Asp-169, Gly-182, Asp-186, and Asn-275. Asp-301 provides a ligand contact to Fe cation.

Belongs to the KAE1 / TsaD family. Fe(2+) serves as cofactor.

The protein localises to the cytoplasm. The catalysed reaction is L-threonylcarbamoyladenylate + adenosine(37) in tRNA = N(6)-L-threonylcarbamoyladenosine(37) in tRNA + AMP + H(+). Its function is as follows. Required for the formation of a threonylcarbamoyl group on adenosine at position 37 (t(6)A37) in tRNAs that read codons beginning with adenine. Is involved in the transfer of the threonylcarbamoyl moiety of threonylcarbamoyl-AMP (TC-AMP) to the N6 group of A37, together with TsaE and TsaB. TsaD likely plays a direct catalytic role in this reaction. In Streptococcus pneumoniae (strain Hungary19A-6), this protein is tRNA N6-adenosine threonylcarbamoyltransferase.